The sequence spans 1485 residues: Chromosome partition protein MukB (1485 aa).

34–41 (GGNGAGKS) is a binding site for ATP. Coiled-coil stretches lie at residues 337-480 (LNLV…QAYQ) and 509-605 (QHLA…PVWL). Positions 666 to 783 (PSGAEDARLI…EVPLFGRAAR (118 aa)) are flexible hinge. Coiled-coil stretches lie at residues 835-915 (EAEI…IQQH) and 977-1116 (GMLT…AKAG).

This sequence belongs to the SMC family. MukB subfamily. In terms of assembly, homodimerization via its hinge domain. Binds to DNA via its C-terminal region. Interacts, and probably forms a ternary complex, with MukE and MukF via its C-terminal region. The complex formation is stimulated by calcium or magnesium. Interacts with tubulin-related protein FtsZ.

Its subcellular location is the cytoplasm. It localises to the nucleoid. Its function is as follows. Plays a central role in chromosome condensation, segregation and cell cycle progression. Functions as a homodimer, which is essential for chromosome partition. Involved in negative DNA supercoiling in vivo, and by this means organize and compact chromosomes. May achieve or facilitate chromosome segregation by condensation DNA from both sides of a centrally located replisome during cell division. The chain is Chromosome partition protein MukB from Yersinia pseudotuberculosis serotype O:3 (strain YPIII).